A 132-amino-acid polypeptide reads, in one-letter code: Transmembrane protein 170B (132 aa).

The Extracellular portion of the chain corresponds to 1–37; the sequence is MRAEGADHSMINLSVQQVLSLWAHGTVLRNLTEMWYW. Asparagine 12 is a glycosylation site (N-linked (GlcNAc...) asparagine). A helical membrane pass occupies residues 38 to 58; it reads IFLWALFSSLFVHGAAGVLMF. The Cytoplasmic segment spans residues 59 to 68; that stretch reads VMLQRHRQGR. Residues 69–89 form a helical membrane-spanning segment; it reads VLSIIAVSIGFLASVTGAMIT. At 90–104 the chain is on the extracellular side; it reads SAAVAGIYRVAGKNM. A helical membrane pass occupies residues 105–125; it reads APLEALVWGVGQTVLTLIISF. Residues 126–132 are Cytoplasmic-facing; sequence SRILATL.

It belongs to the TMEM170 family. In terms of assembly, interacts with CTNNB1.

The protein localises to the cell membrane. The sequence is that of Transmembrane protein 170B (Tmem170b) from Rattus norvegicus (Rat).